The sequence spans 176 residues: MSRQLNIDALRQNFWKEEYLREKMLRCEWYRKYGSMVKAKQKAKAAARLPLKLPTLHPKAPLSPPPAPKSAPSKVPSPVPEAPFQSEMYPVPPITRALLYEGISHDFQGRYRYLNTRKLDMPETRYLFPITTSFTYGWQLGPPVKQELVSCKMCRIESFFRKNGAFALLDPRDLAL.

Residues 55–80 (TLHPKAPLSPPPAPKSAPSKVPSPVP) are disordered. Residues 61–80 (PLSPPPAPKSAPSKVPSPVP) show a composition bias toward pro residues.

This is Protein SPMIP1 from Homo sapiens (Human).